We begin with the raw amino-acid sequence, 98 residues long: NADH-ubiquinone oxidoreductase chain 4L (98 aa).

3 helical membrane-spanning segments follow: residues 1–21, 29–49, and 61–81; these read MALI…GLLL, SLLC…VMIL, and IVLL…LVMV.

It belongs to the complex I subunit 4L family. As to quaternary structure, core subunit of respiratory chain NADH dehydrogenase (Complex I) which is composed of 45 different subunits.

It is found in the mitochondrion inner membrane. It catalyses the reaction a ubiquinone + NADH + 5 H(+)(in) = a ubiquinol + NAD(+) + 4 H(+)(out). Its function is as follows. Core subunit of the mitochondrial membrane respiratory chain NADH dehydrogenase (Complex I) which catalyzes electron transfer from NADH through the respiratory chain, using ubiquinone as an electron acceptor. Part of the enzyme membrane arm which is embedded in the lipid bilayer and involved in proton translocation. This chain is NADH-ubiquinone oxidoreductase chain 4L (MT-ND4L), found in Rhinolophus monoceros (Formosan lesser horseshoe bat).